A 475-amino-acid chain; its full sequence is Polyphosphate:AMP phosphotransferase (475 aa).

PPK2 stretches follow at residues 18 to 222 and 256 to 472; these read LDLI…LTAL and ANYK…KADR.

It belongs to the polyphosphate kinase 2 (PPK2) family. Class II subfamily. As to quaternary structure, homodimer and homotetramer. It depends on Mg(2+) as a cofactor.

It carries out the reaction [phosphate](n) + ADP = [phosphate](n+1) + AMP. In terms of biological role, uses inorganic polyphosphate (polyP) as a donor to convert AMP to ADP. Can also use GMP, UMP, CMP, TMP or deoxyribonucleoside monophosphates, with lower efficiency. Cannot use low-molecular weight polyP as donors. Can also catalyze the synthesis of polyP from ADP or GDP, with lower efficiency. The polypeptide is Polyphosphate:AMP phosphotransferase (Acinetobacter johnsonii).